The chain runs to 362 residues: Transcription factor Sox-7 (362 aa).

The tract at residues 21–41 (EDLSDGLSPHRSPREKGSETR) is disordered. Residues 32-41 (SPREKGSETR) show a composition bias toward basic and acidic residues. The segment at residues 42-110 (IRRPMNAFMV…QHMQDYPNYK (69 aa)) is a DNA-binding region (HMG box). Residues 245–362 (QTGSSMIPPV…ATYYNSYSVS (118 aa)) enclose the Sox C-terminal domain.

As to expression, expressed in the embryonic pronephric sinus as well as posterior cardinal veins.

The protein localises to the nucleus. Its function is as follows. Transcription factor. Binds to the DNA sequence 5'-AACAAT-3'. Acts downstream of vegt and upstream of nodal signaling to promote endodermal and mesodermal differentiation by promoting vegt-induced expression of both endodermal genes (including endodermin) and mesodermal genes (including snai1/snail and snai2/slug). Induces expression of multiple nodal genes (including nodal, nodal2, nodal4, nodal5 and nodal6) and binds directly to sites within the promoter of the nodal5 gene. The endodermal and mesodermal specification pathways then interact to initiate cardiogenesis. Acts partially redundantly with sox18 during cardiogenesis. Also acts as an antagonist of beta-catenin signaling. Regulates (possibly indirectly) development of the pronephros, the functional larval kidney. This chain is Transcription factor Sox-7, found in Xenopus tropicalis (Western clawed frog).